Reading from the N-terminus, the 154-residue chain is Myoglobin (154 aa).

The 147-residue stretch at 2–148 (GLSDGEWQSV…FRNDIAAKYK (147 aa)) folds into the Globin domain. Ser-4 bears the Phosphoserine mark. His-65 contacts nitrite. An O2-binding site is contributed by His-65. Thr-68 carries the post-translational modification Phosphothreonine. Residue His-94 coordinates heme b.

It belongs to the globin family. As to quaternary structure, monomeric.

The protein resides in the cytoplasm. Its subcellular location is the sarcoplasm. It catalyses the reaction Fe(III)-heme b-[protein] + nitric oxide + H2O = Fe(II)-heme b-[protein] + nitrite + 2 H(+). The catalysed reaction is H2O2 + AH2 = A + 2 H2O. In terms of biological role, monomeric heme protein which primary function is to store oxygen and facilitate its diffusion within muscle tissues. Reversibly binds oxygen through a pentacoordinated heme iron and enables its timely and efficient release as needed during periods of heightened demand. Depending on the oxidative conditions of tissues and cells, and in addition to its ability to bind oxygen, it also has a nitrite reductase activity whereby it regulates the production of bioactive nitric oxide. Under stress conditions, like hypoxia and anoxia, it also protects cells against reactive oxygen species thanks to its pseudoperoxidase activity. The polypeptide is Myoglobin (MB) (Nycticebus coucang (Slow loris)).